The chain runs to 424 residues: Glutamyl-tRNA reductase (424 aa).

Substrate is bound by residues 49–52 (TCNR), Ser-105, 110–112 (EPQ), and Gln-116. The active-site Nucleophile is Cys-50. 185 to 190 (GSGETA) contacts NADP(+).

It belongs to the glutamyl-tRNA reductase family. In terms of assembly, homodimer.

It carries out the reaction (S)-4-amino-5-oxopentanoate + tRNA(Glu) + NADP(+) = L-glutamyl-tRNA(Glu) + NADPH + H(+). Its pathway is porphyrin-containing compound metabolism; protoporphyrin-IX biosynthesis; 5-aminolevulinate from L-glutamyl-tRNA(Glu): step 1/2. Its function is as follows. Catalyzes the NADPH-dependent reduction of glutamyl-tRNA(Glu) to glutamate 1-semialdehyde (GSA). The chain is Glutamyl-tRNA reductase from Legionella pneumophila (strain Lens).